Consider the following 382-residue polypeptide: Queuine tRNA-ribosyltransferase (382 aa).

The active-site Proton acceptor is the aspartate 89. Residues 89–93 (DSGGF), aspartate 143, glutamine 187, and glycine 214 contribute to the substrate site. The interval 245–251 (GVGKPED) is RNA binding. Aspartate 264 (nucleophile) is an active-site residue. An RNA binding; important for wobble base 34 recognition region spans residues 269–273 (TRNAR). Zn(2+) contacts are provided by cysteine 302, cysteine 304, cysteine 307, and histidine 333.

Belongs to the queuine tRNA-ribosyltransferase family. Homodimer. Within each dimer, one monomer is responsible for RNA recognition and catalysis, while the other monomer binds to the replacement base PreQ1. Zn(2+) is required as a cofactor.

It catalyses the reaction 7-aminomethyl-7-carbaguanine + guanosine(34) in tRNA = 7-aminomethyl-7-carbaguanosine(34) in tRNA + guanine. It functions in the pathway tRNA modification; tRNA-queuosine biosynthesis. Functionally, catalyzes the base-exchange of a guanine (G) residue with the queuine precursor 7-aminomethyl-7-deazaguanine (PreQ1) at position 34 (anticodon wobble position) in tRNAs with GU(N) anticodons (tRNA-Asp, -Asn, -His and -Tyr). Catalysis occurs through a double-displacement mechanism. The nucleophile active site attacks the C1' of nucleotide 34 to detach the guanine base from the RNA, forming a covalent enzyme-RNA intermediate. The proton acceptor active site deprotonates the incoming PreQ1, allowing a nucleophilic attack on the C1' of the ribose to form the product. After dissociation, two additional enzymatic reactions on the tRNA convert PreQ1 to queuine (Q), resulting in the hypermodified nucleoside queuosine (7-(((4,5-cis-dihydroxy-2-cyclopenten-1-yl)amino)methyl)-7-deazaguanosine). This Sodalis glossinidius (strain morsitans) protein is Queuine tRNA-ribosyltransferase.